The sequence spans 116 residues: Non-specific lipid transfer protein GPI-anchored 17 (116 aa).

An N-terminal signal peptide occupies residues 1–24; the sequence is MKIGVVLVLLTVFVVVMSSTSVSA. 3 cysteine pairs are disulfide-bonded: cysteine 31/cysteine 74, cysteine 42/cysteine 58, and cysteine 59/cysteine 99. Residue asparagine 107 is the site of GPI-anchor amidated asparagine attachment. Positions 108–116 are cleaved as a propeptide — removed in mature form; sequence GKNFKNTSL. The N-linked (GlcNAc...) asparagine glycan is linked to asparagine 113.

The protein belongs to the plant LTP family. In terms of tissue distribution, expressed in seedlings, preferentially in roots.

Its subcellular location is the cell membrane. Its function is as follows. Probable lipid transfer protein. The chain is Non-specific lipid transfer protein GPI-anchored 17 from Arabidopsis thaliana (Mouse-ear cress).